We begin with the raw amino-acid sequence, 286 residues long: ATP synthase gamma chain (286 aa).

The protein belongs to the ATPase gamma chain family. As to quaternary structure, F-type ATPases have 2 components, CF(1) - the catalytic core - and CF(0) - the membrane proton channel. CF(1) has five subunits: alpha(3), beta(3), gamma(1), delta(1), epsilon(1). CF(0) has three main subunits: a, b and c.

The protein resides in the cell membrane. Produces ATP from ADP in the presence of a proton gradient across the membrane. The gamma chain is believed to be important in regulating ATPase activity and the flow of protons through the CF(0) complex. The chain is ATP synthase gamma chain from Ruminococcus albus (strain ATCC 27210 / DSM 20455 / JCM 14654 / NCDO 2250 / 7).